Reading from the N-terminus, the 476-residue chain is MADASHDTQVSGHLTAIHGSVVDVRFPQGVLPALNEGIVIDRDEPTPVLAEVQQHLDPVTIRAVALGNTAGLSRGVSARALGTPIQTPVGDAVLGRLLNAVGKPADRGPELPPSTVFRPIHASAPALNRLGASQEIFHTGIKVIDLLAPLVKGGKAAMFGGAGVGKTVLIMELIRTTVERYSGISVFAGIGERSREGHELLLELKQSGVLPRTALVFGQMNEPPGARWRAGLTALTIAEHFRDVQHENVLLLIDNVYRLVQAGGEVSGLLGRLPSRVGYQPTLASEIAELQERIASVAGAAITSIQAVYVPADDFTDPAVAEIFSHLDSSIVLSRQMASEAMYPAVDPLASSSTLLDARLVGEGHYRTAQEVRKTIAHYRDLQEIIALLGIEELSAIDRQAVKRARRLMRFLTQPFMVTVAFTGKEGRTVEVADTLAGCRAILDGEADNWAESSLYMIGVLEEARERERASAKAMS.

160 to 167 (GGAGVGKT) contacts ATP.

The protein belongs to the ATPase alpha/beta chains family. F-type ATPases have 2 components, CF(1) - the catalytic core - and CF(0) - the membrane proton channel. CF(1) has five subunits: alpha(3), beta(3), gamma(1), delta(1), epsilon(1). CF(0) has four main subunits: a(1), b(1), b'(1) and c(9-12).

The protein resides in the cell inner membrane. The catalysed reaction is ATP + H2O + 4 H(+)(in) = ADP + phosphate + 5 H(+)(out). Produces ATP from ADP in the presence of a proton gradient across the membrane. The catalytic sites are hosted primarily by the beta subunits. This is ATP synthase subunit beta 2 from Bradyrhizobium sp. (strain BTAi1 / ATCC BAA-1182).